The following is a 375-amino-acid chain: MEDNITSIVIDCGSGMCKAGIGGEEFPRVSFPSIVGKPRFEKTMCAIGNKEYYVGDEAQSQRGMLSLKYPIKNGIVVNWEYMEKLLFHMFYNELRVSPDQYPILFTESPLNPKSNREMLTQIMFEKFNVPALYIAIQAVLSLYASGRTCGIVLDSGDDVTHTVPIYGGYVLQHSIIRLNFAGSDLTEYMAKLLLERGYSFTTTSEMEIVKSIKEKLAYVAINFNAEMSKPIDTLETTYQLPDGQIIIIGNERFRCAEALFQPSMIGLECDGIHETIFKSIMMCDIDIRKHMYANILLSGGNTMLSGISDRIYNQLRELAPNNMKILIVASPERKNLVWIGGSILTTLPLFQEMWISKEEYDEHGPSIINKKVGLY.

It belongs to the actin family.

It localises to the cytoplasm. Its subcellular location is the cytoskeleton. The catalysed reaction is ATP + H2O = ADP + phosphate + H(+). Functionally, actins are highly conserved proteins that are involved in various types of cell motility and are ubiquitously expressed in all eukaryotic cells. Multiple isoforms are involved in various cellular functions such as cytoskeleton structure, cell mobility, chromosome movement and muscle contraction. The chain is Putative actin-26 (act26) from Dictyostelium discoideum (Social amoeba).